Here is a 234-residue protein sequence, read N- to C-terminus: Sugar fermentation stimulation protein homolog (234 aa).

Belongs to the SfsA family.

The polypeptide is Sugar fermentation stimulation protein homolog (Idiomarina loihiensis (strain ATCC BAA-735 / DSM 15497 / L2-TR)).